Reading from the N-terminus, the 266-residue chain is UPF0294 protein YafD (266 aa).

Belongs to the UPF0294 family.

Its subcellular location is the cytoplasm. This chain is UPF0294 protein YafD, found in Salmonella newport (strain SL254).